The chain runs to 95 residues: Aspartyl/glutamyl-tRNA(Asn/Gln) amidotransferase subunit C (95 aa).

Belongs to the GatC family. Heterotrimer of A, B and C subunits.

It catalyses the reaction L-glutamyl-tRNA(Gln) + L-glutamine + ATP + H2O = L-glutaminyl-tRNA(Gln) + L-glutamate + ADP + phosphate + H(+). The catalysed reaction is L-aspartyl-tRNA(Asn) + L-glutamine + ATP + H2O = L-asparaginyl-tRNA(Asn) + L-glutamate + ADP + phosphate + 2 H(+). Functionally, allows the formation of correctly charged Asn-tRNA(Asn) or Gln-tRNA(Gln) through the transamidation of misacylated Asp-tRNA(Asn) or Glu-tRNA(Gln) in organisms which lack either or both of asparaginyl-tRNA or glutaminyl-tRNA synthetases. The reaction takes place in the presence of glutamine and ATP through an activated phospho-Asp-tRNA(Asn) or phospho-Glu-tRNA(Gln). The polypeptide is Aspartyl/glutamyl-tRNA(Asn/Gln) amidotransferase subunit C (Azotobacter vinelandii (strain DJ / ATCC BAA-1303)).